A 178-amino-acid polypeptide reads, in one-letter code: Transcription factor E (178 aa).

The region spanning 5–89 is the HTH TFE/IIEalpha-type domain; that stretch reads AEELILSLAK…YWKVNIDQIN (85 aa).

Belongs to the TFE family. In terms of assembly, monomer. Interaction with RNA polymerase subunits RpoF and RpoE is necessary for Tfe stimulatory transcription activity. Able to interact with Tbp and RNA polymerase in the absence of DNA promoter. Interacts both with the preinitiation and elongation complexes.

Transcription factor that plays a role in the activation of archaeal genes transcribed by RNA polymerase. Facilitates transcription initiation by enhancing TATA-box recognition by TATA-box-binding protein (Tbp), and transcription factor B (Tfb) and RNA polymerase recruitment. Not absolutely required for transcription in vitro, but particularly important in cases where Tbp or Tfb function is not optimal. It dynamically alters the nucleic acid-binding properties of RNA polymerases by stabilizing the initiation complex and destabilizing elongation complexes. Seems to translocate with the RNA polymerase following initiation and acts by binding to the non template strand of the transcription bubble in elongation complexes. The sequence is that of Transcription factor E from Sulfurisphaera tokodaii (strain DSM 16993 / JCM 10545 / NBRC 100140 / 7) (Sulfolobus tokodaii).